The primary structure comprises 359 residues: 4-hydroxy-3-methylbut-2-en-1-yl diphosphate synthase (flavodoxin) (359 aa).

[4Fe-4S] cluster contacts are provided by C264, C267, C299, and E306.

Belongs to the IspG family. [4Fe-4S] cluster is required as a cofactor.

It catalyses the reaction (2E)-4-hydroxy-3-methylbut-2-enyl diphosphate + oxidized [flavodoxin] + H2O + 2 H(+) = 2-C-methyl-D-erythritol 2,4-cyclic diphosphate + reduced [flavodoxin]. It participates in isoprenoid biosynthesis; isopentenyl diphosphate biosynthesis via DXP pathway; isopentenyl diphosphate from 1-deoxy-D-xylulose 5-phosphate: step 5/6. Converts 2C-methyl-D-erythritol 2,4-cyclodiphosphate (ME-2,4cPP) into 1-hydroxy-2-methyl-2-(E)-butenyl 4-diphosphate. This Helicobacter pylori (strain G27) protein is 4-hydroxy-3-methylbut-2-en-1-yl diphosphate synthase (flavodoxin).